The chain runs to 652 residues: Sodium-dependent nutrient amino acid transporter 1 (652 aa).

The tract at residues Met-1–Pro-54 is disordered. Residues Met-1–Asn-58 lie on the Cytoplasmic side of the membrane. The segment covering His-7–Thr-16 has biased composition (polar residues). The span at Ala-21–Thr-42 shows a compositional bias: low complexity. Positions Thr-43–Pro-54 are enriched in basic and acidic residues. Transmembrane regions (helical) follow at residues Trp-59–Val-79, Gly-92–Leu-112, Val-130–Thr-150, and Leu-155–Tyr-175. Residues Asn-201 and Asn-204 are each glycosylated (N-linked (GlcNAc...) asparagine). 9 consecutive transmembrane segments (helical) span residues Pro-240–Met-260, Ala-269–Val-289, Ala-318–Ser-338, Ile-352–Leu-372, Leu-412–Leu-432, Ile-458–Leu-478, Thr-485–Met-505, Cys-527–Ile-547, and Ala-564–Ile-584.

It belongs to the sodium:neurotransmitter symporter (SNF) (TC 2.A.22) family.

It is found in the membrane. Functionally, unusual broad substrate spectrum amino acid:sodium cotransporter that promotes absorption of the D isomers of essential amino acids. Neutral amino acids are the preferred substrates, especially methionine and phenylalanine. The polypeptide is Sodium-dependent nutrient amino acid transporter 1 (Drosophila persimilis (Fruit fly)).